Reading from the N-terminus, the 267-residue chain is Small ribosomal subunit protein uS3 (267 aa).

In terms of domain architecture, KH type-2 spans 38 to 106; the sequence is IRKLLATGME…QVQLNILEVK (69 aa). Residues 215-267 form a disordered region; sequence TAASAPAGDRDRPRRERPSRPRRSGSTGTTATSTEAGRAATAVVEAPAENQEG. The segment covering 222–233 has biased composition (basic and acidic residues); it reads GDRDRPRRERPS. A compositionally biased stretch (low complexity) spans 238 to 256; that stretch reads SGSTGTTATSTEAGRAATA.

This sequence belongs to the universal ribosomal protein uS3 family. Part of the 30S ribosomal subunit. Forms a tight complex with proteins S10 and S14.

Its function is as follows. Binds the lower part of the 30S subunit head. Binds mRNA in the 70S ribosome, positioning it for translation. In Nocardia farcinica (strain IFM 10152), this protein is Small ribosomal subunit protein uS3.